The sequence spans 602 residues: Aspartate--tRNA(Asp/Asn) ligase (602 aa).

E176 lines the L-aspartate pocket. The segment at 200–203 is aspartate; it reads QQFK. The L-aspartate site is built by R222 and H452. Residue 222–224 participates in ATP binding; the sequence is RDE. E490 lines the ATP pocket. Residue R497 coordinates L-aspartate. 542-545 provides a ligand contact to ATP; sequence GIDR.

It belongs to the class-II aminoacyl-tRNA synthetase family. Type 1 subfamily. In terms of assembly, homodimer.

Its subcellular location is the cytoplasm. It carries out the reaction tRNA(Asx) + L-aspartate + ATP = L-aspartyl-tRNA(Asx) + AMP + diphosphate. Its function is as follows. Aspartyl-tRNA synthetase with relaxed tRNA specificity since it is able to aspartylate not only its cognate tRNA(Asp) but also tRNA(Asn). Reaction proceeds in two steps: L-aspartate is first activated by ATP to form Asp-AMP and then transferred to the acceptor end of tRNA(Asp/Asn). This chain is Aspartate--tRNA(Asp/Asn) ligase, found in Rickettsia akari (strain Hartford).